A 134-amino-acid chain; its full sequence is Small ribosomal subunit protein bS6 (134 aa).

The segment at 103-134 is disordered; that stretch reads AAPVKSAEEGTEEVAAEAATEAPAETTTTVEV. Positions 118–134 are enriched in low complexity; that stretch reads AEAATEAPAETTTTVEV.

The protein belongs to the bacterial ribosomal protein bS6 family.

Functionally, binds together with bS18 to 16S ribosomal RNA. This chain is Small ribosomal subunit protein bS6, found in Geobacter sp. (strain M21).